A 165-amino-acid chain; its full sequence is uncharacterized protein (165 aa).

The helical transmembrane segment at 15–35 (MSPAIILIGVLILIVLFVIKF) threads the bilayer. A coiled-coil region spans residues 67–119 (ISQLNTLRATLAAKKKELKTLRTARKKECTEQLAKTQAEVDRIQAKIDNFSSR). The tract at residues 123–156 (VPLPGGEVGPPYNPPPPRTNTRPNPRPNPRPAQL) is disordered. Over residues 133 to 154 (PYNPPPPRTNTRPNPRPNPRPA) the composition is skewed to pro residues.

Its subcellular location is the membrane. This is an uncharacterized protein from Acheta domesticus (House cricket).